The primary structure comprises 664 residues: DNA ligase (664 aa).

Residues 31 to 35 (DSTYD), 80 to 81 (SL), and Glu110 contribute to the NAD(+) site. Lys112 functions as the N6-AMP-lysine intermediate in the catalytic mechanism. Arg133, Glu167, Lys282, and Lys306 together coordinate NAD(+). Positions 400, 403, 418, and 423 each coordinate Zn(2+). A BRCT domain is found at 583–664 (QSNAPLAGKT…LLEELAKYEG (82 aa)).

Belongs to the NAD-dependent DNA ligase family. LigA subfamily. The cofactor is Mg(2+). Mn(2+) serves as cofactor.

It carries out the reaction NAD(+) + (deoxyribonucleotide)n-3'-hydroxyl + 5'-phospho-(deoxyribonucleotide)m = (deoxyribonucleotide)n+m + AMP + beta-nicotinamide D-nucleotide.. DNA ligase that catalyzes the formation of phosphodiester linkages between 5'-phosphoryl and 3'-hydroxyl groups in double-stranded DNA using NAD as a coenzyme and as the energy source for the reaction. It is essential for DNA replication and repair of damaged DNA. The chain is DNA ligase from Exiguobacterium sibiricum (strain DSM 17290 / CCUG 55495 / CIP 109462 / JCM 13490 / 255-15).